Consider the following 545-residue polypeptide: Alpha-galactosidase A (545 aa).

The signal sequence occupies residues 1–31 (MIQGLESIMNQGTKRILLAATLAATPWQVYG). An intrachain disulfide couples Cys-54 to Cys-86. Asn-57, Asn-95, Asn-101, and Asn-131 each carry an N-linked (GlcNAc...) asparagine glycan. Cys-134 and Cys-164 are disulfide-bonded. The Nucleophile role is filled by Asp-162. Asn-211 is a glycosylation site (N-linked (GlcNAc...) asparagine). Asp-220 serves as the catalytic Proton donor. Asn-363 and Asn-444 each carry an N-linked (GlcNAc...) asparagine glycan. The Ricin B-type lectin domain occupies 421 to 518 (CSSVVPTGLV…KNAKTDGCLT (98 aa)). Intrachain disulfides connect Cys-438/Cys-452 and Cys-477/Cys-490.

It belongs to the glycosyl hydrolase 27 family. In terms of processing, a C-terminal Ser/Thr-rich region may provide possible sites for O-glycosylation.

It localises to the secreted. It catalyses the reaction Hydrolysis of terminal, non-reducing alpha-D-galactose residues in alpha-D-galactosides, including galactose oligosaccharides, galactomannans and galactolipids.. Functionally, hydrolyzes a variety of simple alpha-D-galactoside as well as more complex molecules such as oligosaccharides and polysaccharides. The chain is Alpha-galactosidase A (aglA) from Aspergillus niger.